The chain runs to 213 residues: MAATALFRSIRRRDVVSAPLSVYKSLAGNAQPSWGSSYIGQNYASFSRAFGSKPVVNDILGTGLGTNNAIREEREKSKSTEAAIVGAQLTRSFRALDVGTSKRLFSTISGDIKTTQEEPKIKSFRPLSPHLSVYQPQMNSMLSIFNRISGVYLTGVTFAGYLLYLKMGMICLTYPSFYQVLYHTQQQLPVITSVTALAAIYHTIKSTHSLLTH.

A mitochondrion-targeting transit peptide spans 1 to 105 (MAATALFRSI…LDVGTSKRLF (105 aa)). Position 130 (His-130) interacts with heme. The helical transmembrane segment at 148 to 165 (ISGVYLTGVTFAGYLLYL) threads the bilayer.

Component of complex II composed of eight subunits in plants: four classical SDH subunits SDH1, SDH2, SDH3 and SDH4 (a flavoprotein (FP), an iron-sulfur protein (IP), and a cytochrome b composed of a large and a small subunit.), as well as four subunits unknown in mitochondria from bacteria and heterotrophic eukaryotes. Heme is required as a cofactor. Expressed in flowers, inflorescences and stems.

The protein localises to the mitochondrion inner membrane. Its pathway is carbohydrate metabolism; tricarboxylic acid cycle. Membrane-anchoring subunit of succinate dehydrogenase (SDH). This chain is Succinate dehydrogenase subunit 3-1, mitochondrial, found in Arabidopsis thaliana (Mouse-ear cress).